A 287-amino-acid polypeptide reads, in one-letter code: Protoheme IX farnesyltransferase (287 aa).

8 helical membrane-spanning segments follow: residues 9–29, 31–51, 94–114, 132–152, 158–178, 202–222, 228–248, and 267–287; these read IVTM…SATL, LIDW…AGAA, IILW…TWLI, VGAI…GGTL, WMLF…IAWL, AWQS…LAWF, VASA…WPLL, and LRWS…RASL.

The protein belongs to the UbiA prenyltransferase family. Protoheme IX farnesyltransferase subfamily.

It localises to the cell inner membrane. It carries out the reaction heme b + (2E,6E)-farnesyl diphosphate + H2O = Fe(II)-heme o + diphosphate. It participates in porphyrin-containing compound metabolism; heme O biosynthesis; heme O from protoheme: step 1/1. Converts heme B (protoheme IX) to heme O by substitution of the vinyl group on carbon 2 of heme B porphyrin ring with a hydroxyethyl farnesyl side group. This chain is Protoheme IX farnesyltransferase, found in Rhodopirellula baltica (strain DSM 10527 / NCIMB 13988 / SH1).